The following is a 111-amino-acid chain: Flagellar hook-basal body complex protein FliE (111 aa).

The protein belongs to the FliE family.

The protein localises to the bacterial flagellum basal body. In Brucella abortus (strain S19), this protein is Flagellar hook-basal body complex protein FliE.